We begin with the raw amino-acid sequence, 103 residues long: Co-chaperonin GroES (103 aa).

Belongs to the GroES chaperonin family. As to quaternary structure, heptamer of 7 subunits arranged in a ring. Interacts with the chaperonin GroEL.

The protein resides in the cytoplasm. Its function is as follows. Together with the chaperonin GroEL, plays an essential role in assisting protein folding. The GroEL-GroES system forms a nano-cage that allows encapsulation of the non-native substrate proteins and provides a physical environment optimized to promote and accelerate protein folding. GroES binds to the apical surface of the GroEL ring, thereby capping the opening of the GroEL channel. This Synechococcus sp. (strain CC9311) protein is Co-chaperonin GroES.